A 341-amino-acid chain; its full sequence is UDP-glucose 4-epimerase (341 aa).

The protein belongs to the polysaccharide synthase family.

The enzyme catalyses UDP-alpha-D-glucose = UDP-alpha-D-galactose. Functionally, epimerizes UDP-galactose to UDP-glucose. In Rickettsia akari (strain Hartford), this protein is UDP-glucose 4-epimerase (capD).